The sequence spans 475 residues: Eukaryotic translation initiation factor 3 subunit L (475 aa).

The PCI domain occupies 257–451; the sequence is DAIRMFSHIL…DLDYAMQGDL (195 aa).

It belongs to the eIF-3 subunit L family. In terms of assembly, component of the eukaryotic translation initiation factor 3 (eIF-3) complex.

The protein resides in the cytoplasm. Component of the eukaryotic translation initiation factor 3 (eIF-3) complex, which is involved in protein synthesis of a specialized repertoire of mRNAs and, together with other initiation factors, stimulates binding of mRNA and methionyl-tRNAi to the 40S ribosome. The eIF-3 complex specifically targets and initiates translation of a subset of mRNAs involved in cell proliferation. The chain is Eukaryotic translation initiation factor 3 subunit L from Botryotinia fuckeliana (strain B05.10) (Noble rot fungus).